The sequence spans 1036 residues: Beta-galactosidase (1036 aa).

Substrate contacts are provided by Asn-97 and Asp-197. Asp-197 provides a ligand contact to Na(+). Mg(2+) is bound by residues Glu-411, His-413, and Glu-456. Substrate is bound by residues Glu-456 and 532–535; that span reads EYAH. The active-site Proton donor is Glu-456. Glu-532 functions as the Nucleophile in the catalytic mechanism. Asn-592 provides a ligand contact to Mg(2+). Na(+)-binding residues include Phe-596 and Asp-599. Substrate-binding residues include Asp-599 and Trp-1006.

The protein belongs to the glycosyl hydrolase 2 family. Homotetramer. Mg(2+) is required as a cofactor. Requires Na(+) as cofactor.

It carries out the reaction Hydrolysis of terminal non-reducing beta-D-galactose residues in beta-D-galactosides.. This is Beta-galactosidase from Leuconostoc mesenteroides subsp. mesenteroides (strain ATCC 8293 / DSM 20343 / BCRC 11652 / CCM 1803 / JCM 6124 / NCDO 523 / NBRC 100496 / NCIMB 8023 / NCTC 12954 / NRRL B-1118 / 37Y).